Consider the following 154-residue polypeptide: Large ribosomal subunit protein uL13 (154 aa).

Belongs to the universal ribosomal protein uL13 family. In terms of assembly, part of the 50S ribosomal subunit.

Its function is as follows. This protein is one of the early assembly proteins of the 50S ribosomal subunit, although it is not seen to bind rRNA by itself. It is important during the early stages of 50S assembly. This Rhizobium etli (strain ATCC 51251 / DSM 11541 / JCM 21823 / NBRC 15573 / CFN 42) protein is Large ribosomal subunit protein uL13.